A 71-amino-acid chain; its full sequence is Large ribosomal subunit protein bL31 (71 aa).

Positions 16, 18, 36, and 39 each coordinate Zn(2+).

The protein belongs to the bacterial ribosomal protein bL31 family. Type A subfamily. In terms of assembly, part of the 50S ribosomal subunit. Zn(2+) is required as a cofactor.

Its function is as follows. Binds the 23S rRNA. This Thermotoga sp. (strain RQ2) protein is Large ribosomal subunit protein bL31.